Here is a 309-residue protein sequence, read N- to C-terminus: Ketosamine-3-kinase (309 aa).

Residue S20 is modified to Phosphoserine. 89–91 contacts ATP; the sequence is EHL. D217 serves as the catalytic Proton acceptor.

This sequence belongs to the fructosamine kinase family.

The catalysed reaction is N(6)-D-ribulosyl-L-lysyl-[protein] + ATP = N(6)-(3-O-phospho-D-ribulosyl)-L-lysyl-[protein] + ADP + H(+). The enzyme catalyses N(6)-(D-psicosyl)-L-lysyl-[protein] + ATP = N(6)-(3-O-phospho-D-psicosyl)-L-lysyl-[protein] + ADP + H(+). Ketosamine-3-kinase involved in protein deglycation by mediating phosphorylation of ribuloselysine and psicoselysine on glycated proteins, to generate ribuloselysine-3 phosphate and psicoselysine-3 phosphate, respectively. Ribuloselysine-3 phosphate and psicoselysine-3 phosphate adducts are unstable and decompose under physiological conditions. Not able to phosphorylate fructoselysine. This chain is Ketosamine-3-kinase, found in Mus musculus (Mouse).